The following is a 481-amino-acid chain: Glutamyl-tRNA(Gln) amidotransferase subunit A (481 aa).

Active-site charge relay system residues include K74 and S149. S173 functions as the Acyl-ester intermediate in the catalytic mechanism.

Belongs to the amidase family. GatA subfamily. As to quaternary structure, heterotrimer of A, B and C subunits.

The catalysed reaction is L-glutamyl-tRNA(Gln) + L-glutamine + ATP + H2O = L-glutaminyl-tRNA(Gln) + L-glutamate + ADP + phosphate + H(+). In terms of biological role, allows the formation of correctly charged Gln-tRNA(Gln) through the transamidation of misacylated Glu-tRNA(Gln) in organisms which lack glutaminyl-tRNA synthetase. The reaction takes place in the presence of glutamine and ATP through an activated gamma-phospho-Glu-tRNA(Gln). In Francisella tularensis subsp. holarctica (strain FTNF002-00 / FTA), this protein is Glutamyl-tRNA(Gln) amidotransferase subunit A.